The primary structure comprises 339 residues: Serpentine receptor class alpha-21 (339 aa).

Transmembrane regions (helical) follow at residues 30-50 (FNFLFITTVILLSYCFTWLAI), 150-170 (FIAVSLLVLQLLLTLVSFYIA), 199-219 (VRTVVMVCCLVVTGFIYYLSV), 250-270 (ILIVLKLFCNMLSSIGINLLL), and 282-302 (VLVALFLPGVTYANLCLPLVI).

This sequence belongs to the nematode receptor-like protein sra family.

It localises to the membrane. The sequence is that of Serpentine receptor class alpha-21 (sra-21) from Caenorhabditis elegans.